Consider the following 284-residue polypeptide: Bifunctional protein FolD (284 aa).

Residues 165-167, Ser190, and Ile231 each bind NADP(+); that span reads GRS.

The protein belongs to the tetrahydrofolate dehydrogenase/cyclohydrolase family. Homodimer.

It carries out the reaction (6R)-5,10-methylene-5,6,7,8-tetrahydrofolate + NADP(+) = (6R)-5,10-methenyltetrahydrofolate + NADPH. It catalyses the reaction (6R)-5,10-methenyltetrahydrofolate + H2O = (6R)-10-formyltetrahydrofolate + H(+). It participates in one-carbon metabolism; tetrahydrofolate interconversion. In terms of biological role, catalyzes the oxidation of 5,10-methylenetetrahydrofolate to 5,10-methenyltetrahydrofolate and then the hydrolysis of 5,10-methenyltetrahydrofolate to 10-formyltetrahydrofolate. This Streptococcus thermophilus (strain CNRZ 1066) protein is Bifunctional protein FolD.